Reading from the N-terminus, the 278-residue chain is Ribosomal RNA small subunit methyltransferase A (278 aa).

Residues Asn-27, Leu-29, Gly-54, Glu-75, Asp-95, and Asn-118 each contribute to the S-adenosyl-L-methionine site.

It belongs to the class I-like SAM-binding methyltransferase superfamily. rRNA adenine N(6)-methyltransferase family. RsmA subfamily.

Its subcellular location is the cytoplasm. It catalyses the reaction adenosine(1518)/adenosine(1519) in 16S rRNA + 4 S-adenosyl-L-methionine = N(6)-dimethyladenosine(1518)/N(6)-dimethyladenosine(1519) in 16S rRNA + 4 S-adenosyl-L-homocysteine + 4 H(+). Functionally, specifically dimethylates two adjacent adenosines (A1518 and A1519) in the loop of a conserved hairpin near the 3'-end of 16S rRNA in the 30S particle. May play a critical role in biogenesis of 30S subunits. The chain is Ribosomal RNA small subunit methyltransferase A from Chlamydia abortus (strain DSM 27085 / S26/3) (Chlamydophila abortus).